A 488-amino-acid polypeptide reads, in one-letter code: Solute carrier family 41 member 3 (488 aa).

Composition is skewed to basic and acidic residues over residues 1 to 19 (MEGT…RLKE) and 27 to 36 (DAGRLPKASE). A disordered region spans residues 1–36 (MEGTEARQRRLEGCGRLKELGPLPSHDAGRLPKASE). 9 helical membrane-spanning segments follow: residues 63–83 (LIIG…LSWA), 147–167 (LAVV…ASLM), 189–209 (VITA…IVIG), 220–240 (IATP…LALM), 251–271 (WYLT…WLFI), 284–304 (YGWF…LILS), 377–397 (VLLF…CLVE), 406–426 (IFIL…LYLA), and 450–470 (GLGD…DWLL).

It belongs to the SLC41A transporter family.

Its subcellular location is the mitochondrion inner membrane. It catalyses the reaction Mg(2+)(in) + 2 Na(+)(out) = Mg(2+)(out) + 2 Na(+)(in). Na(+)/Mg(2+) ion exchanger that acts as a predominant Mg(2+) efflux system at the mitochondrial inner membrane. This chain is Solute carrier family 41 member 3 (Slc41a3), found in Mus musculus (Mouse).